Here is a 41-residue protein sequence, read N- to C-terminus: Conotoxin Ac4.2 (41 aa).

Positions 1–11 are excised as a propeptide; it reads FDGRNAAVNER. Pro13 carries the 4-hydroxyproline modification. O-linked (HexNAc...) threonine glycosylation is found at Thr18 and Thr20. 2 positions are modified to 4-hydroxyproline: Pro29 and Pro33. Cys40 carries the post-translational modification Cysteine amide.

It belongs to the conotoxin A superfamily. Contains 3 disulfide bonds. As to expression, expressed by the venom duct.

The protein localises to the secreted. Probable neurotoxin with ion channel inhibitor activity. The chain is Conotoxin Ac4.2 from Conus achatinus (Little frog cone).